We begin with the raw amino-acid sequence, 158 residues long: NAD(P)H-quinone oxidoreductase subunit J, chloroplastic (158 aa).

It belongs to the complex I 30 kDa subunit family. In terms of assembly, NDH is composed of at least 16 different subunits, 5 of which are encoded in the nucleus.

It localises to the plastid. The protein resides in the chloroplast thylakoid membrane. It catalyses the reaction a plastoquinone + NADH + (n+1) H(+)(in) = a plastoquinol + NAD(+) + n H(+)(out). The catalysed reaction is a plastoquinone + NADPH + (n+1) H(+)(in) = a plastoquinol + NADP(+) + n H(+)(out). In terms of biological role, NDH shuttles electrons from NAD(P)H:plastoquinone, via FMN and iron-sulfur (Fe-S) centers, to quinones in the photosynthetic chain and possibly in a chloroplast respiratory chain. The immediate electron acceptor for the enzyme in this species is believed to be plastoquinone. Couples the redox reaction to proton translocation, and thus conserves the redox energy in a proton gradient. This is NAD(P)H-quinone oxidoreductase subunit J, chloroplastic from Panax ginseng (Korean ginseng).